A 559-amino-acid chain; its full sequence is Alkaline phosphatase PhoK (559 aa).

The N-terminal stretch at 1 to 19 is a signal peptide; it reads MLKHVAAALLLATAMPVVA. Asp49 and Thr89 together coordinate Zn(2+). Thr89 acts as the Phosphothreonine intermediate in catalysis. Residues Cys90 and Cys126 are joined by a disulfide bond. Substrate-binding positions include Asn110 and 171–173; that span reads KDR. The cysteines at positions 231 and 314 are disulfide-linked. Positions 300, 304, 345, 346, and 491 each coordinate Zn(2+). Cys545 and Cys556 are joined by a disulfide.

In terms of assembly, monomer. Zn(2+) is required as a cofactor.

It is found in the secreted. It catalyses the reaction a phosphate monoester + H2O = an alcohol + phosphate. In terms of biological role, alkaline phosphatase with broad substrate specificity. Precipitates uranium from alkaline solutions. The sequence is that of Alkaline phosphatase PhoK from Sphingomonas sp.